A 435-amino-acid polypeptide reads, in one-letter code: 3-phosphoshikimate 1-carboxyvinyltransferase (435 aa).

Residues lysine 25, serine 26, and arginine 30 each coordinate 3-phosphoshikimate. Lysine 25 contributes to the phosphoenolpyruvate binding site. Phosphoenolpyruvate-binding residues include glycine 99 and arginine 130. Serine 176, serine 177, glutamine 178, serine 204, aspartate 319, asparagine 342, and lysine 346 together coordinate 3-phosphoshikimate. Glutamine 178 is a phosphoenolpyruvate binding site. Aspartate 319 functions as the Proton acceptor in the catalytic mechanism. Phosphoenolpyruvate-binding residues include arginine 350, arginine 394, and lysine 419.

This sequence belongs to the EPSP synthase family. In terms of assembly, monomer.

The protein resides in the cytoplasm. The enzyme catalyses 3-phosphoshikimate + phosphoenolpyruvate = 5-O-(1-carboxyvinyl)-3-phosphoshikimate + phosphate. It functions in the pathway metabolic intermediate biosynthesis; chorismate biosynthesis; chorismate from D-erythrose 4-phosphate and phosphoenolpyruvate: step 6/7. Functionally, catalyzes the transfer of the enolpyruvyl moiety of phosphoenolpyruvate (PEP) to the 5-hydroxyl of shikimate-3-phosphate (S3P) to produce enolpyruvyl shikimate-3-phosphate and inorganic phosphate. This chain is 3-phosphoshikimate 1-carboxyvinyltransferase, found in Haemophilus ducreyi (strain 35000HP / ATCC 700724).